Consider the following 550-residue polypeptide: Cytokinin dehydrogenase 10 (550 aa).

An N-terminal signal peptide occupies residues 1–26; the sequence is MMPRAQLTTFLIVTSFLSTVPYLRAP. One can recognise an FAD-binding PCMH-type domain in the interval 64–245; that stretch reads VHATPNGVFR…TRARIRLEPA (182 aa). The FAD site is built by Gly100, Lys101, and Gly102. His103 bears the Pros-8alpha-FAD histidine mark. FAD-binding residues include Ser104, Gln108, Asp169, Thr174, Ser180, Ile184, and Ile235. Asn289 is a glycosylation site (N-linked (GlcNAc...) asparagine). The FAD site is built by Tyr489, Ser524, and Gln527. The disordered stretch occupies residues 523 to 550; it reads LSPGQGIFPPPPPPSPPPPAAGEPITAS. Over residues 530–543 the composition is skewed to pro residues; that stretch reads FPPPPPPSPPPPAA.

This sequence belongs to the oxygen-dependent FAD-linked oxidoreductase family. As to quaternary structure, monomer. FAD is required as a cofactor.

The protein localises to the secreted. It is found in the extracellular space. The catalysed reaction is N(6)-dimethylallyladenine + A + H2O = 3-methyl-2-butenal + adenine + AH2. Its function is as follows. Catalyzes the oxidation of cytokinins, a family of N(6)-substituted adenine derivatives that are plant hormones, where the substituent is an isopentenyl group. In Oryza sativa subsp. japonica (Rice), this protein is Cytokinin dehydrogenase 10 (CKX10).